A 493-amino-acid polypeptide reads, in one-letter code: Sorting nexin-4 (493 aa).

Positions 1-67 (MDQDGFHSIA…KAGEAGDVGV (67 aa)) are disordered. The span at 37–48 (SISPSSAQPPAS) shows a compositional bias: low complexity. Positions 89 to 211 (WMDVQVREPA…DFLQSTEWSV (123 aa)) constitute a PX domain. 3 residues coordinate a 1,2-diacyl-sn-glycero-3-phospho-(1D-myo-inositol-3-phosphate): Arg132, Lys158, and Arg177.

Belongs to the sorting nexin family.

The protein resides in the cytoplasm. The protein localises to the cytosol. Its subcellular location is the preautophagosomal structure membrane. It localises to the endosome membrane. In terms of biological role, sorting nexin, involved in the separation or division of vacuoles throughout the entire life cycle of the cells. Involved in retrieval of late-Golgi SNAREs from post-Golgi endosomes to the trans-Golgi network, for cytoplasm to vacuole transport (Cvt), and autophagy of large cargos including mitophagy, pexophagy and glycophagy. This is Sorting nexin-4 (SNX4) from Cryptococcus neoformans var. neoformans serotype D (strain B-3501A) (Filobasidiella neoformans).